A 308-amino-acid polypeptide reads, in one-letter code: Aspartate carbamoyltransferase catalytic subunit (308 aa).

Positions 57 and 58 each coordinate carbamoyl phosphate. Lys-86 is an L-aspartate binding site. 3 residues coordinate carbamoyl phosphate: Arg-107, His-135, and Gln-138. Positions 168 and 229 each coordinate L-aspartate. Carbamoyl phosphate is bound by residues Leu-268 and Pro-269.

The protein belongs to the aspartate/ornithine carbamoyltransferase superfamily. ATCase family. Heterooligomer of catalytic and regulatory chains.

It catalyses the reaction carbamoyl phosphate + L-aspartate = N-carbamoyl-L-aspartate + phosphate + H(+). It functions in the pathway pyrimidine metabolism; UMP biosynthesis via de novo pathway; (S)-dihydroorotate from bicarbonate: step 2/3. Catalyzes the condensation of carbamoyl phosphate and aspartate to form carbamoyl aspartate and inorganic phosphate, the committed step in the de novo pyrimidine nucleotide biosynthesis pathway. The protein is Aspartate carbamoyltransferase catalytic subunit of Pyrococcus furiosus (strain ATCC 43587 / DSM 3638 / JCM 8422 / Vc1).